A 480-amino-acid polypeptide reads, in one-letter code: Trigger factor (480 aa).

A PPIase FKBP-type domain is found at 161–249 (GDRLLITGKF…VVEVLKEQLP (89 aa)). Residues 426–480 (TEEPVEKEAEEKNEEFAIDHEVLPTKDHDAIPAAKYDDNTPKGAETEDKQEKDKD) form a disordered region. The span at 429–480 (PVEKEAEEKNEEFAIDHEVLPTKDHDAIPAAKYDDNTPKGAETEDKQEKDKD) shows a compositional bias: basic and acidic residues.

Belongs to the FKBP-type PPIase family. Tig subfamily.

The protein resides in the cytoplasm. The enzyme catalyses [protein]-peptidylproline (omega=180) = [protein]-peptidylproline (omega=0). Involved in protein export. Acts as a chaperone by maintaining the newly synthesized protein in an open conformation. Functions as a peptidyl-prolyl cis-trans isomerase. The protein is Trigger factor of Rhodopirellula baltica (strain DSM 10527 / NCIMB 13988 / SH1).